A 202-amino-acid polypeptide reads, in one-letter code: ATP-dependent Clp protease proteolytic subunit (202 aa).

The Nucleophile role is filled by Ser106. The active site involves His131.

This sequence belongs to the peptidase S14 family. Fourteen ClpP subunits assemble into 2 heptameric rings which stack back to back to give a disk-like structure with a central cavity, resembling the structure of eukaryotic proteasomes.

It is found in the cytoplasm. It catalyses the reaction Hydrolysis of proteins to small peptides in the presence of ATP and magnesium. alpha-casein is the usual test substrate. In the absence of ATP, only oligopeptides shorter than five residues are hydrolyzed (such as succinyl-Leu-Tyr-|-NHMec, and Leu-Tyr-Leu-|-Tyr-Trp, in which cleavage of the -Tyr-|-Leu- and -Tyr-|-Trp bonds also occurs).. Its function is as follows. Cleaves peptides in various proteins in a process that requires ATP hydrolysis. Has a chymotrypsin-like activity. Plays a major role in the degradation of misfolded proteins. This is ATP-dependent Clp protease proteolytic subunit from Verminephrobacter eiseniae (strain EF01-2).